We begin with the raw amino-acid sequence, 284 residues long: Bifunctional protein FolD 1 (284 aa).

NADP(+) contacts are provided by residues 166-168 (GAS) and Ile232.

It belongs to the tetrahydrofolate dehydrogenase/cyclohydrolase family. As to quaternary structure, homodimer.

The enzyme catalyses (6R)-5,10-methylene-5,6,7,8-tetrahydrofolate + NADP(+) = (6R)-5,10-methenyltetrahydrofolate + NADPH. It catalyses the reaction (6R)-5,10-methenyltetrahydrofolate + H2O = (6R)-10-formyltetrahydrofolate + H(+). It participates in one-carbon metabolism; tetrahydrofolate interconversion. Catalyzes the oxidation of 5,10-methylenetetrahydrofolate to 5,10-methenyltetrahydrofolate and then the hydrolysis of 5,10-methenyltetrahydrofolate to 10-formyltetrahydrofolate. The polypeptide is Bifunctional protein FolD 1 (Pseudomonas syringae pv. tomato (strain ATCC BAA-871 / DC3000)).